The following is a 369-amino-acid chain: Glutamate 5-kinase (369 aa).

Lys7 contacts ATP. The substrate site is built by Ser48, Asp135, and Asn147. ATP is bound by residues 167–168 and 208–214; these read TD and SGGMASK. The PUA domain occupies 275-353; that stretch reads AGALHLDEGA…HEIAALLGIE (79 aa).

It belongs to the glutamate 5-kinase family.

Its subcellular location is the cytoplasm. The catalysed reaction is L-glutamate + ATP = L-glutamyl 5-phosphate + ADP. The protein operates within amino-acid biosynthesis; L-proline biosynthesis; L-glutamate 5-semialdehyde from L-glutamate: step 1/2. In terms of biological role, catalyzes the transfer of a phosphate group to glutamate to form L-glutamate 5-phosphate. In Gloeobacter violaceus (strain ATCC 29082 / PCC 7421), this protein is Glutamate 5-kinase.